The primary structure comprises 382 residues: Galactokinase (382 aa).

Residue 34–37 coordinates substrate; that stretch reads EHTD. ATP is bound at residue 124 to 130; sequence GAGLSSS. Residues S130 and E162 each coordinate Mg(2+). D174 serves as the catalytic Proton acceptor. A substrate-binding site is contributed by Y223.

It belongs to the GHMP kinase family. GalK subfamily.

Its subcellular location is the cytoplasm. It carries out the reaction alpha-D-galactose + ATP = alpha-D-galactose 1-phosphate + ADP + H(+). The protein operates within carbohydrate metabolism; galactose metabolism. Functionally, catalyzes the transfer of the gamma-phosphate of ATP to D-galactose to form alpha-D-galactose-1-phosphate (Gal-1-P). This chain is Galactokinase, found in Shigella dysenteriae serotype 1 (strain Sd197).